Here is an 811-residue protein sequence, read N- to C-terminus: Protein VAC14 homolog (811 aa).

HEAT repeat units follow at residues 81–119 (DSYM…VAKG), 122–160 (FRYF…IVMQ), 240–278 (ISYL…EIQK), 334–372 (QIDY…IAPK), 375–412 (LLQI…LVSK), 431–469 (SVDF…RTGG), and 472–510 (INMH…SHKS). Low complexity predominate over residues 775-785 (TSASGITTTAS). Residues 775 to 811 (TSASGITTTASNSRDSFITRLPPTAALSTGARKKPKQ) are disordered.

Belongs to the VAC14 family. Component of the PI(3,5)P2 regulatory complex, composed of ATG18, FIG4, FAB1, VAC14 and VAC7. VAC14 nucleates the assembly of the complex and serves as a scaffold.

The protein resides in the cytoplasm. The protein localises to the vacuole membrane. The PI(3,5)P2 regulatory complex regulates both the synthesis and turnover of phosphatidylinositol 3,5-bisphosphate (PtdIns(3,5)P2). Regulates the synthesis of PtdIns(3,5)P2 by positive activation of FAB1 and by controlling FIG4 localization. The sequence is that of Protein VAC14 homolog from Schizosaccharomyces pombe (strain 972 / ATCC 24843) (Fission yeast).